The sequence spans 215 residues: Oligoribonuclease (215 aa).

The Exonuclease domain maps to 5 to 170 (LVWIDCEMTG…ADIHESIREL (166 aa)). Residue Y127 is part of the active site. Residues 196-215 (LDEGKDAPGPSDSASAPPTG) are disordered. Positions 202 to 215 (APGPSDSASAPPTG) are enriched in low complexity.

It belongs to the oligoribonuclease family.

The protein localises to the cytoplasm. In terms of biological role, 3'-to-5' exoribonuclease specific for small oligoribonucleotides. The polypeptide is Oligoribonuclease (Mycolicibacterium paratuberculosis (strain ATCC BAA-968 / K-10) (Mycobacterium paratuberculosis)).